Consider the following 159-residue polypeptide: Glucosamine 6-phosphate N-acetyltransferase (159 aa).

An N-acetylserine modification is found at S2. Residues T28, 86-89 (KIIH), and 98-100 (EDI) each bind D-glucosamine 6-phosphate. The region spanning 28–159 (TTVGTITPES…NAGVEMQIRK (132 aa)) is the N-acetyltransferase domain. Acetyl-CoA contacts are provided by residues 100 to 102 (IAV) and 108 to 113 (GQGLGK). D-glucosamine 6-phosphate contacts are provided by residues 129 to 130 (YK) and D134. 143–145 (YEK) lines the acetyl-CoA pocket. R158 contributes to the D-glucosamine 6-phosphate binding site.

The protein belongs to the acetyltransferase family. GNA1 subfamily. As to quaternary structure, homodimer.

It carries out the reaction D-glucosamine 6-phosphate + acetyl-CoA = N-acetyl-D-glucosamine 6-phosphate + CoA + H(+). The protein operates within nucleotide-sugar biosynthesis; UDP-N-acetyl-alpha-D-glucosamine biosynthesis; N-acetyl-alpha-D-glucosamine 1-phosphate from alpha-D-glucosamine 6-phosphate (route I): step 1/2. The chain is Glucosamine 6-phosphate N-acetyltransferase (GNA1) from Saccharomyces cerevisiae (strain ATCC 204508 / S288c) (Baker's yeast).